Reading from the N-terminus, the 341-residue chain is Holliday junction branch migration complex subunit RuvB (341 aa).

Residues Asp3 to Tyr184 are large ATPase domain (RuvB-L). ATP contacts are provided by residues Leu23, Arg24, Gly65, Lys68, Thr69, Thr70, Glu131–Tyr133, Arg174, Tyr184, and Arg221. Thr69 provides a ligand contact to Mg(2+). Residues Asp185–Asn255 are small ATPAse domain (RuvB-S). Residues Arg258–Asp341 are head domain (RuvB-H). Positions 313 and 318 each coordinate DNA.

The protein belongs to the RuvB family. Homohexamer. Forms an RuvA(8)-RuvB(12)-Holliday junction (HJ) complex. HJ DNA is sandwiched between 2 RuvA tetramers; dsDNA enters through RuvA and exits via RuvB. An RuvB hexamer assembles on each DNA strand where it exits the tetramer. Each RuvB hexamer is contacted by two RuvA subunits (via domain III) on 2 adjacent RuvB subunits; this complex drives branch migration. In the full resolvosome a probable DNA-RuvA(4)-RuvB(12)-RuvC(2) complex forms which resolves the HJ.

The protein localises to the cytoplasm. It carries out the reaction ATP + H2O = ADP + phosphate + H(+). Functionally, the RuvA-RuvB-RuvC complex processes Holliday junction (HJ) DNA during genetic recombination and DNA repair, while the RuvA-RuvB complex plays an important role in the rescue of blocked DNA replication forks via replication fork reversal (RFR). RuvA specifically binds to HJ cruciform DNA, conferring on it an open structure. The RuvB hexamer acts as an ATP-dependent pump, pulling dsDNA into and through the RuvAB complex. RuvB forms 2 homohexamers on either side of HJ DNA bound by 1 or 2 RuvA tetramers; 4 subunits per hexamer contact DNA at a time. Coordinated motions by a converter formed by DNA-disengaged RuvB subunits stimulates ATP hydrolysis and nucleotide exchange. Immobilization of the converter enables RuvB to convert the ATP-contained energy into a lever motion, pulling 2 nucleotides of DNA out of the RuvA tetramer per ATP hydrolyzed, thus driving DNA branch migration. The RuvB motors rotate together with the DNA substrate, which together with the progressing nucleotide cycle form the mechanistic basis for DNA recombination by continuous HJ branch migration. Branch migration allows RuvC to scan DNA until it finds its consensus sequence, where it cleaves and resolves cruciform DNA. This is Holliday junction branch migration complex subunit RuvB from Parabacteroides distasonis (strain ATCC 8503 / DSM 20701 / CIP 104284 / JCM 5825 / NCTC 11152).